A 38-amino-acid polypeptide reads, in one-letter code: Bacteriocin BAC79 (38 aa).

With respect to regulation, the antimicrobial activity of BAC79 was completely lost after treatment with enzymes trypsin, pepsin, proteinase-K, and carboxypeptidase, while there was no loss of activity with either amylase or lipase. Has antibacterial activity against a wide spectrum of Gram-positive and Gram-negative bacteria, including L.monocytogenes which is inhibited through disruption of the cell membrane. This Weissella confusa (Lactobacillus confusus) protein is Bacteriocin BAC79.